The following is a 308-amino-acid chain: Putative protein TIC 214 N-terminal part (308 aa).

Helical transmembrane passes span 18 to 38, 64 to 84, 87 to 107, 124 to 144, 172 to 192, and 215 to 235; these read IINSVVVVGFYYGFLTTFSIG, FITGQLMMFISIYYAPLHLAL, PHTITVLVLPHLLFHFFWNNH, LSIQCVFLNNLIFQLFNHFIL, VGWLIGHILFMKWVGLVLSWI, and IFSILLFITSVYYLGRMPSPI. A compositionally biased stretch (basic and acidic residues) spans 239 to 249; the sequence is KLKETSEMEER. The disordered stretch occupies residues 239–308; the sequence is KLKETSEMEE…RDPSEWKGNI (70 aa). Positions 250–262 are enriched in acidic residues; sequence GESEEETDVEIET. The segment covering 264-273 has biased composition (basic and acidic residues); it reads SETKETKQEQ. The segment covering 275–293 has biased composition (acidic residues); the sequence is GSTEEDPSLCSEEQEDPDK. The span at 294–308 shows a compositional bias: basic and acidic residues; that stretch reads LDETGRDPSEWKGNI.

Belongs to the TIC214 family. As to quaternary structure, part of the Tic complex.

Its subcellular location is the plastid. The protein localises to the chloroplast inner membrane. Involved in protein precursor import into chloroplasts. May be part of an intermediate translocation complex acting as a protein-conducting channel at the inner envelope. In Piper cenocladum (Ant piper), this protein is Putative protein TIC 214 N-terminal part.